A 336-amino-acid chain; its full sequence is Fructose-1,6-bisphosphatase class 1 (336 aa).

Residues E90, D112, L114, and D115 each contribute to the Mg(2+) site. Substrate is bound by residues 115 to 118, N207, and K273; that span reads DGSS. Residue E279 coordinates Mg(2+).

Belongs to the FBPase class 1 family. Homotetramer. Mg(2+) is required as a cofactor.

It is found in the cytoplasm. The catalysed reaction is beta-D-fructose 1,6-bisphosphate + H2O = beta-D-fructose 6-phosphate + phosphate. It participates in carbohydrate biosynthesis; gluconeogenesis. The polypeptide is Fructose-1,6-bisphosphatase class 1 (Xanthomonas oryzae pv. oryzae (strain PXO99A)).